Here is a 72-residue protein sequence, read N- to C-terminus: SPbeta prophage-derived uncharacterized protein YorV (72 aa).

The sequence is that of SPbeta prophage-derived uncharacterized protein YorV (yorV) from Bacillus subtilis (strain 168).